Here is a 229-residue protein sequence, read N- to C-terminus: Putative N-acetylmannosamine-6-phosphate 2-epimerase (229 aa).

This sequence belongs to the NanE family.

It carries out the reaction an N-acyl-D-glucosamine 6-phosphate = an N-acyl-D-mannosamine 6-phosphate. It participates in amino-sugar metabolism; N-acetylneuraminate degradation; D-fructose 6-phosphate from N-acetylneuraminate: step 3/5. In terms of biological role, converts N-acetylmannosamine-6-phosphate (ManNAc-6-P) to N-acetylglucosamine-6-phosphate (GlcNAc-6-P). This chain is Putative N-acetylmannosamine-6-phosphate 2-epimerase, found in Shigella sonnei (strain Ss046).